The chain runs to 59 residues: Single-pass membrane and coiled-coil domain-containing protein 4 (59 aa).

Positions methionine 1–methionine 23 are disordered. Positions lysine 9–alanine 22 are enriched in basic and acidic residues. Residues lysine 9–threonine 31 adopt a coiled-coil conformation. Residues threonine 32 to alanine 52 traverse the membrane as a helical segment.

It belongs to the SMCO4 family.

The protein resides in the membrane. This Homo sapiens (Human) protein is Single-pass membrane and coiled-coil domain-containing protein 4 (SMCO4).